The primary structure comprises 669 residues: PDF receptor (669 aa).

Topologically, residues 1–244 (MTLLSNILDC…DIARRTRTLE (244 aa)) are extracellular. Residues 24–52 (RQSGSSGPSPSAPTAGTFESKSMLEPTSS) form a disordered region. The span at 26–40 (SGSSGPSPSAPTAGT) shows a compositional bias: low complexity. N-linked (GlcNAc...) asparagine glycosylation is found at asparagine 111, asparagine 117, asparagine 130, asparagine 137, asparagine 148, and asparagine 198. Residues 245–265 (IVGLCLSLFALIVSLLIFCTF) form a helical membrane-spanning segment. At 266-274 (RSLRNNRTK) the chain is on the cytoplasmic side. The helical transmembrane segment at 275–295 (IHKNLFVAMVLQVIIRLTLYL) threads the bilayer. At 296 to 334 (DQFRRGNKEAATNTSLSVIENTPYLCEASYVLLEYARTA) the chain is on the extracellular side. Residue asparagine 308 is glycosylated (N-linked (GlcNAc...) asparagine). Residues 335 to 355 (MFMWMFIEGLYLHNMVTVAVF) traverse the membrane as a helical segment. Residues 356–366 (QGSFPLKFFSR) lie on the Cytoplasmic side of the membrane. A helical transmembrane segment spans residues 367–387 (LGWCVPILMTTVWARCTVMYM). Residues 388–411 (DTSLGECLWNYNLTPYYWILEGPR) are Extracellular-facing. Residues 412–432 (LAVILLNFCFLVNIIRVLVMK) traverse the membrane as a helical segment. Over 433–449 (LRQSQASDIEQTRKAVR) the chain is Cytoplasmic. A helical membrane pass occupies residues 450-470 (AAIVLLPLLGITNLLHQLAPL). The Extracellular portion of the chain corresponds to 471-480 (KTATNFAVWS). Residues 481–501 (YGTHFLTSFQGFFIALIYCFL) form a helical membrane-spanning segment. The Cytoplasmic segment spans residues 502–669 (NGEVRAVLLK…ESVVFELSEQ (168 aa)). Disordered regions lie at residues 536-573 (AYNT…KPSS) and 590-614 (PRLQ…AEPD). The span at 595–609 (KAREKGKDRVEKTDA) shows a compositional bias: basic and acidic residues.

The protein belongs to the G-protein coupled receptor 2 family. Mainly present in clock neurons of the brain. Localizes in all 4 s-LNv neurons, 1 LNd neuron, 7 DN1 neurons, and 1 DN3 neuron. In addition to the clock neurons, it is also present in approximately 13 pairs of neurons along the ventral nerve cord in third instar larvae, which do not overlap with dopaminergic or serotonergic neurons. Not present in DN2 neurons (at protein level).

The protein localises to the cell membrane. Its function is as follows. Receptor for PDF, a neuropeptide controlling circadian behavioral rhythms. Probably regulates circadian behavioral rhythms through coordination of activities of clock neurons. PDF-binding results in the elevation of cAMP synthesis. Plays a role in sleep regulation and regulates the state transition from sleep to wake. In Drosophila melanogaster (Fruit fly), this protein is PDF receptor.